The primary structure comprises 589 residues: Aspartate--tRNA ligase 2 (589 aa).

Glu-174 is a binding site for L-aspartate. The segment at 198 to 201 is aspartate; sequence QITK. An L-aspartate-binding site is contributed by Arg-220. ATP is bound by residues 220-222 and Gln-229; that span reads RDE. Position 443 (His-443) interacts with L-aspartate. Glu-477 contributes to the ATP binding site. Residue Arg-484 coordinates L-aspartate. 529–532 is a binding site for ATP; that stretch reads GLDR.

It belongs to the class-II aminoacyl-tRNA synthetase family. Type 1 subfamily. As to quaternary structure, homodimer.

It localises to the cytoplasm. The catalysed reaction is tRNA(Asp) + L-aspartate + ATP = L-aspartyl-tRNA(Asp) + AMP + diphosphate. Catalyzes the attachment of L-aspartate to tRNA(Asp) in a two-step reaction: L-aspartate is first activated by ATP to form Asp-AMP and then transferred to the acceptor end of tRNA(Asp). The polypeptide is Aspartate--tRNA ligase 2 (Streptococcus mutans serotype c (strain ATCC 700610 / UA159)).